A 170-amino-acid chain; its full sequence is Type II secretion system protein H (170 aa).

A propeptide spans 1 to 5 (MRQRG) (leader sequence). At Phe6 the chain carries N-methylphenylalanine. A helical membrane pass occupies residues 6-29 (FTLLEMMLILLLMGVSAGMVLLAF).

The protein belongs to the GSP H family. As to quaternary structure, type II secretion is composed of four main components: the outer membrane complex, the inner membrane complex, the cytoplasmic secretion ATPase and the periplasm-spanning pseudopilus. Interacts with core component PulG. Post-translationally, cleaved by prepilin peptidase. Methylated by prepilin peptidase at the amino group of the N-terminal phenylalanine once the leader sequence is cleaved by prepilin peptidase.

The protein localises to the cell inner membrane. Component of the type II secretion system required for the energy-dependent secretion of extracellular factors such as proteases and toxins from the periplasm. Part of the pseudopilus tip complex that is critical for the recognition and binding of secretion substrates. This Klebsiella pneumoniae protein is Type II secretion system protein H (pulH).